The chain runs to 155 residues: Small ribosomal subunit protein uS7 (155 aa).

The protein belongs to the universal ribosomal protein uS7 family. Part of the 30S ribosomal subunit. Contacts proteins S9 and S11.

One of the primary rRNA binding proteins, it binds directly to 16S rRNA where it nucleates assembly of the head domain of the 30S subunit. Is located at the subunit interface close to the decoding center, probably blocks exit of the E-site tRNA. The protein is Small ribosomal subunit protein uS7 of Xanthomonas axonopodis pv. citri (strain 306).